A 953-amino-acid chain; its full sequence is Ubiquitin carboxyl-terminal hydrolase CYLD (953 aa).

The segment at C106 to G590 is interaction with TRIP. CAP-Gly domains lie at L153–A198 and D253–C286. 2 disordered regions span residues P313–S349 and S384–E410. Residues T337–R346 are compositionally biased toward polar residues. S384, S415, and S419 each carry phosphoserine. Residues D391–G466 are interaction with TRAF2. Residues L467 to E681 form an interaction with IKBKG/NEMO region. Residues G489 to K532 form the CAP-Gly 3 domain. The USP domain maps to K589 to P947. C598 (nucleophile) is an active-site residue. Residues L778 to H830 form a B-box region. The Zn(2+) site is built by C785, C788, C796, C799, C814, C817, H822, and H830. Catalysis depends on H868, which acts as the Proton acceptor.

The protein belongs to the peptidase C19 family. In terms of assembly, interacts (via CAP-Gly domain) with IKBKG/NEMO (via proline-rich C-terminal region). Interacts with TRAF2 and TRIP. Interacts with PLK1, DVL1, DVL3, MAVS, TBK1, IKKE and RIGI. Interacts (via CAP-Gly domain) with microtubules. Interacts with HDAC6 and BCL3. Interacts with MAP3K7. Identified in a complex with TRAF6 and SQSTM1. Interacts with OPTN and SQSTM1. Interacts with CEP350. Interacts with RNF31; the interaction is indirect and is mediated via SPATA2. Interacts with SPATA2 (via the PUB domain); the interaction is direct and recruits CYLD to the LUBAC complex, thereby regulating TNF-alpha-induced necroptosis. In terms of processing, phosphorylated on several serine residues by IKKA and/or IKKB in response to immune stimuli. Phosphorylation requires IKBKG. Phosphorylation abolishes TRAF2 deubiquitination, interferes with the activation of Jun kinases, and strongly reduces CD40-dependent gene activation by NF-kappa-B. Ubiquitinated. Polyubiquitinated in hepatocytes treated with palmitic acid. Ubiquitination is mediated by E3 ligase TRIM47 and leads to proteasomal degradation.

It is found in the cytoplasm. The protein resides in the perinuclear region. The protein localises to the cytoskeleton. Its subcellular location is the cell membrane. It localises to the microtubule organizing center. It is found in the centrosome. The protein resides in the spindle. The protein localises to the cilium basal body. It carries out the reaction Thiol-dependent hydrolysis of ester, thioester, amide, peptide and isopeptide bonds formed by the C-terminal Gly of ubiquitin (a 76-residue protein attached to proteins as an intracellular targeting signal).. In terms of biological role, deubiquitinase that specifically cleaves 'Lys-63'- and linear 'Met-1'-linked polyubiquitin chains and is involved in NF-kappa-B activation and TNF-alpha-induced necroptosis. Negatively regulates NF-kappa-B activation by deubiquitinating upstream signaling factors. Contributes to the regulation of cell survival, proliferation and differentiation via its effects on NF-kappa-B activation. Negative regulator of Wnt signaling. Inhibits HDAC6 and thereby promotes acetylation of alpha-tubulin and stabilization of microtubules. Plays a role in the regulation of microtubule dynamics, and thereby contributes to the regulation of cell proliferation, cell polarization, cell migration, and angiogenesis. Required for normal cell cycle progress and normal cytokinesis. Inhibits nuclear translocation of NF-kappa-B. Plays a role in the regulation of inflammation and the innate immune response, via its effects on NF-kappa-B activation. Dispensable for the maturation of intrathymic natural killer cells, but required for the continued survival of immature natural killer cells. Negatively regulates TNFRSF11A signaling and osteoclastogenesis. Involved in the regulation of ciliogenesis, allowing ciliary basal bodies to migrate and dock to the plasma membrane; this process does not depend on NF-kappa-B activation. Ability to remove linear ('Met-1'-linked) polyubiquitin chains regulates innate immunity and TNF-alpha-induced necroptosis: recruited to the LUBAC complex via interaction with SPATA2 and restricts linear polyubiquitin formation on target proteins. Regulates innate immunity by restricting linear polyubiquitin formation on RIPK2 in response to NOD2 stimulation. Involved in TNF-alpha-induced necroptosis by removing linear ('Met-1'-linked) polyubiquitin chains from RIPK1, thereby regulating the kinase activity of RIPK1. Negatively regulates intestinal inflammation by removing 'Lys-63' linked polyubiquitin chain of NLRP6, thereby reducing the interaction between NLRP6 and PYCARD/ASC and formation of the NLRP6 inflammasome. Does not catalyze deubiquitination of heterotypic 'Lys-63'-/'Lys-48'-linked branched ubiquitin chains. Removes 'Lys-63' linked polyubiquitin chain of MAP3K7, which inhibits phosphorylation and blocks downstream activation of the JNK-p38 kinase cascades. Also removes 'Lys-63'-linked polyubiquitin chains of MAP3K1 and MA3P3K3, which inhibit their interaction with MAP2K1 and MAP2K2. The sequence is that of Ubiquitin carboxyl-terminal hydrolase CYLD (CYLD) from Bos taurus (Bovine).